Consider the following 226-residue polypeptide: ATP synthase F(0) complex subunit a (226 aa).

The next 6 membrane-spanning stretches (helical) occupy residues 6–26 (FASF…IIMF), 68–88 (WTLM…LGLL), 97–117 (QLSM…ITGF), 138–158 (IPML…ALAV), 164–184 (ITAG…LMNI), and 189–209 (ATIT…VALI).

This sequence belongs to the ATPase A chain family. As to quaternary structure, component of the ATP synthase complex composed at least of ATP5F1A/subunit alpha, ATP5F1B/subunit beta, ATP5MC1/subunit c (homooctomer), MT-ATP6/subunit a, MT-ATP8/subunit 8, ATP5ME/subunit e, ATP5MF/subunit f, ATP5MG/subunit g, ATP5MK/subunit k, ATP5MJ/subunit j, ATP5F1C/subunit gamma, ATP5F1D/subunit delta, ATP5F1E/subunit epsilon, ATP5PF/subunit F6, ATP5PB/subunit b, ATP5PD/subunit d, ATP5PO/subunit OSCP. ATP synthase complex consists of a soluble F(1) head domain (subunits alpha(3) and beta(3)) - the catalytic core - and a membrane F(0) domain - the membrane proton channel (subunits c, a, 8, e, f, g, k and j). These two domains are linked by a central stalk (subunits gamma, delta, and epsilon) rotating inside the F1 region and a stationary peripheral stalk (subunits F6, b, d, and OSCP). Interacts with DNAJC30; interaction is direct.

Its subcellular location is the mitochondrion inner membrane. The catalysed reaction is H(+)(in) = H(+)(out). Subunit a, of the mitochondrial membrane ATP synthase complex (F(1)F(0) ATP synthase or Complex V) that produces ATP from ADP in the presence of a proton gradient across the membrane which is generated by electron transport complexes of the respiratory chain. ATP synthase complex consist of a soluble F(1) head domain - the catalytic core - and a membrane F(1) domain - the membrane proton channel. These two domains are linked by a central stalk rotating inside the F(1) region and a stationary peripheral stalk. During catalysis, ATP synthesis in the catalytic domain of F(1) is coupled via a rotary mechanism of the central stalk subunits to proton translocation. With the subunit c (ATP5MC1), forms the proton-conducting channel in the F(0) domain, that contains two crucial half-channels (inlet and outlet) that facilitate proton movement from the mitochondrial intermembrane space (IMS) into the matrix. Protons are taken up via the inlet half-channel and released through the outlet half-channel, following a Grotthuss mechanism. The chain is ATP synthase F(0) complex subunit a from Mus musculus (Mouse).